Here is a 424-residue protein sequence, read N- to C-terminus: Serine hydroxymethyltransferase (424 aa).

(6S)-5,6,7,8-tetrahydrofolate-binding positions include leucine 113 and glycine 117 to leucine 119. Lysine 222 carries the N6-(pyridoxal phosphate)lysine modification. Residue serine 361 to phenylalanine 363 coordinates (6S)-5,6,7,8-tetrahydrofolate.

Belongs to the SHMT family. In terms of assembly, homodimer. The cofactor is pyridoxal 5'-phosphate.

The protein resides in the cytoplasm. It catalyses the reaction (6R)-5,10-methylene-5,6,7,8-tetrahydrofolate + glycine + H2O = (6S)-5,6,7,8-tetrahydrofolate + L-serine. It functions in the pathway one-carbon metabolism; tetrahydrofolate interconversion. The protein operates within amino-acid biosynthesis; glycine biosynthesis; glycine from L-serine: step 1/1. Functionally, catalyzes the reversible interconversion of serine and glycine with tetrahydrofolate (THF) serving as the one-carbon carrier. This reaction serves as the major source of one-carbon groups required for the biosynthesis of purines, thymidylate, methionine, and other important biomolecules. Also exhibits THF-independent aldolase activity toward beta-hydroxyamino acids, producing glycine and aldehydes, via a retro-aldol mechanism. The sequence is that of Serine hydroxymethyltransferase from Flavobacterium psychrophilum (strain ATCC 49511 / DSM 21280 / CIP 103535 / JIP02/86).